Consider the following 370-residue polypeptide: N-acyl-L-amino acid amidohydrolase (370 aa).

This sequence belongs to the peptidase M20 family. In terms of assembly, homotetramer. The cofactor is Co(2+).

The catalysed reaction is an N-acyl-L-amino acid + H2O = an L-alpha-amino acid + a carboxylate. It catalyses the reaction an N-acetyl-L-cysteine-S-conjugate + H2O = an S-substituted L-cysteine + acetate. In terms of biological role, hydrolyzes most efficiently N-acetyl derivatives of aromatic amino acids but is also active on other amino acids. L-stereospecific. The polypeptide is N-acyl-L-amino acid amidohydrolase (amaA) (Geobacillus stearothermophilus (Bacillus stearothermophilus)).